A 441-amino-acid chain; its full sequence is MNRRQQVKRRVGKYEVGRTIGEGTFAKVKFARNSETGEPVALKILDKEKVLKHKMAEQIRREIATMKLIKHPNVVQLYEVMASKTKIFIILEYVTGGELFDKIVNDGRMKEDEARRYFQQLIHAVDYCHSRGVYHRDLKPENLLLDSYGNLKISDFGLSALSQQVRDDGLLHTSCGTPNYVAPEVLNDRGYDGATADMWSCGVVLYVLLAGYLPFDDSNLMNLYKKISSGEFNCPPWLSLGAMKLITRILDPNPMTRVTPQEVFEDEWFKKDYKPPVFEERDDSNMDDIDAVFKDSEEHLVTEKREEQPAAINAFEIISMSRGLNLENLFDPEQEFKRETRITLRGGANEIIEKIEEAAKPLGFDVQKKNYKMRLENVKAGRKGNLNVATEIFQVAPSLHMVQVSKSKGDTLEFHKFYKKLSNSLEQVVWTNNEVKKETAK.

Positions 14 to 269 (YEVGRTIGEG…PQEVFEDEWF (256 aa)) constitute a Protein kinase domain. ATP contacts are provided by residues 20 to 28 (IGEGTFAKV) and K43. The active-site Proton acceptor is the D137. The tract at residues 155-184 (DFGLSALSQQVRDDGLLHTSCGTPNYVAPE) is activation loop. The NAF domain maps to 307–331 (EQPAAINAFEIISMSRGLNLENLFD). Positions 337–366 (KRETRITLRGGANEIIEKIEEAAKPLGFDV) are PPI.

It belongs to the protein kinase superfamily. CAMK Ser/Thr protein kinase family. SNF1 subfamily. Interacts with CBL3 and CBL9. It depends on Mn(2+) as a cofactor. In terms of tissue distribution, mostly expressed in germinating seeds and young seedlings. Detected at low levels in roots, stems, leaves and flowers.

The catalysed reaction is L-seryl-[protein] + ATP = O-phospho-L-seryl-[protein] + ADP + H(+). It catalyses the reaction L-threonyl-[protein] + ATP = O-phospho-L-threonyl-[protein] + ADP + H(+). Functionally, involved in the resistance to some abiotic stresses (e.g. high salt, hyperosmotic stress) in young seedlings, by regulating the expression of several stress-inducible genes (cold- and salt-induced genes but not drought-responsive genes). Required for the ABA response during germination. CIPK serine-threonine protein kinases interact with CBL proteins. Binding of a CBL protein to the regulatory NAF domain of CIPK protein lead to the activation of the kinase in a calcium-dependent manner. The CBL9/CIPK3 complex acts in the regulation of abscisic acid response in seed germination. The sequence is that of CBL-interacting serine/threonine-protein kinase 3 (CIPK3) from Arabidopsis thaliana (Mouse-ear cress).